Consider the following 106-residue polypeptide: MAKIKKGDQVIVIAGKEKGKQGTVLSVSEDRVKVEGLNLVKKHQKPNRVTGAEGGIVTQEASLHISNVAVFNATTQKADRVGYQVDENGAKTRVYKSNGESVAVAK.

The protein belongs to the universal ribosomal protein uL24 family. In terms of assembly, part of the 50S ribosomal subunit.

One of two assembly initiator proteins, it binds directly to the 5'-end of the 23S rRNA, where it nucleates assembly of the 50S subunit. In terms of biological role, one of the proteins that surrounds the polypeptide exit tunnel on the outside of the subunit. The protein is Large ribosomal subunit protein uL24 of Acinetobacter baylyi (strain ATCC 33305 / BD413 / ADP1).